Reading from the N-terminus, the 121-residue chain is Large ribosomal subunit protein uL14 (121 aa).

The protein belongs to the universal ribosomal protein uL14 family. As to quaternary structure, part of the 50S ribosomal subunit. Forms a cluster with proteins L3 and L19. In the 70S ribosome, L14 and L19 interact and together make contacts with the 16S rRNA in bridges B5 and B8.

Its function is as follows. Binds to 23S rRNA. Forms part of two intersubunit bridges in the 70S ribosome. The polypeptide is Large ribosomal subunit protein uL14 (Synechococcus sp. (strain RCC307)).